The primary structure comprises 424 residues: Gamma-glutamyl phosphate reductase (424 aa).

Belongs to the gamma-glutamyl phosphate reductase family.

It is found in the cytoplasm. The catalysed reaction is L-glutamate 5-semialdehyde + phosphate + NADP(+) = L-glutamyl 5-phosphate + NADPH + H(+). It functions in the pathway amino-acid biosynthesis; L-proline biosynthesis; L-glutamate 5-semialdehyde from L-glutamate: step 2/2. Catalyzes the NADPH-dependent reduction of L-glutamate 5-phosphate into L-glutamate 5-semialdehyde and phosphate. The product spontaneously undergoes cyclization to form 1-pyrroline-5-carboxylate. In Shewanella woodyi (strain ATCC 51908 / MS32), this protein is Gamma-glutamyl phosphate reductase.